Here is a 271-residue protein sequence, read N- to C-terminus: Transmembrane protein 150A (271 aa).

The Cytoplasmic portion of the chain corresponds to 1-3 (MTG). A helical transmembrane segment spans residues 4 to 24 (WIVLPISLTAFSIPGIWIVYA). Topologically, residues 25–75 (MAVMNHHVCPVENWTYNLTCTDDNTKAGTPKSCCTLEDVPLISKCGTYPPE) are extracellular. N-linked (GlcNAc...) asparagine glycosylation is found at Asn-37 and Asn-41. Residues 76-96 (SCLFSLIGNVGAFMVVIICLL) form a helical membrane-spanning segment. The Cytoplasmic portion of the chain corresponds to 97–108 (RYSQVIEISQRS). The helical transmembrane segment at 109–129 (WLNTTALIAGCTNAAGLVMVG) threads the bilayer. Residues 130-140 (NFQVDYAKSLH) are Extracellular-facing. The chain crosses the membrane as a helical span at residues 141-161 (YIGAGVAFPAGLLFVCLSSIL). The Cytoplasmic segment spans residues 162–182 (SYQLAASALDYWLGHLRVSLT). The helical transmembrane segment at 183–203 (IVALISLVLTGVFFIQESFLM) threads the bilayer. Topologically, residues 204 to 205 (QH) are extracellular. The chain crosses the membrane as a helical span at residues 206-226 (LVAICEWIFVLDILVFYGTFA). The Cytoplasmic portion of the chain corresponds to 227-271 (YEFGSVSTDTMMAALQSSAARSCKSPGSSSTSTQLHCNAERIAMI).

The protein belongs to the DRAM/TMEM150 family.

The protein resides in the cell membrane. Regulates localization of phosphatidylinositol 4-kinase (PI4K) to the plasma membrane. The polypeptide is Transmembrane protein 150A (tmem150a) (Xenopus laevis (African clawed frog)).